A 482-amino-acid chain; its full sequence is Bifunctional protein GlmU (482 aa).

The interval 1 to 238 (MSATSPAAVV…HREILGINNR (238 aa)) is pyrophosphorylase. UDP-N-acetyl-alpha-D-glucosamine contacts are provided by residues 12–15 (LAAG), K26, Q79, and 84–85 (GT). D110 lines the Mg(2+) pocket. UDP-N-acetyl-alpha-D-glucosamine contacts are provided by G147, E163, N178, and N236. Position 236 (N236) interacts with Mg(2+). The tract at residues 239 to 259 (LQLAEARRLLNERLLERAMLA) is linker. The interval 260 to 482 (GVTVVDPAST…ASSQETDGQS (223 aa)) is N-acetyltransferase. UDP-N-acetyl-alpha-D-glucosamine is bound by residues R341 and K359. Catalysis depends on H371, which acts as the Proton acceptor. UDP-N-acetyl-alpha-D-glucosamine contacts are provided by Y374 and N385. Residues A388, 394 to 395 (NY), S413, A431, and R448 contribute to the acetyl-CoA site. The disordered stretch occupies residues 458–482 (VARKRPGSAAAQAAQASSQETDGQS). Low complexity predominate over residues 465–476 (SAAAQAAQASSQ).

This sequence in the N-terminal section; belongs to the N-acetylglucosamine-1-phosphate uridyltransferase family. In the C-terminal section; belongs to the transferase hexapeptide repeat family. As to quaternary structure, homotrimer. It depends on Mg(2+) as a cofactor.

The protein resides in the cytoplasm. The catalysed reaction is alpha-D-glucosamine 1-phosphate + acetyl-CoA = N-acetyl-alpha-D-glucosamine 1-phosphate + CoA + H(+). The enzyme catalyses N-acetyl-alpha-D-glucosamine 1-phosphate + UTP + H(+) = UDP-N-acetyl-alpha-D-glucosamine + diphosphate. It participates in nucleotide-sugar biosynthesis; UDP-N-acetyl-alpha-D-glucosamine biosynthesis; N-acetyl-alpha-D-glucosamine 1-phosphate from alpha-D-glucosamine 6-phosphate (route II): step 2/2. The protein operates within nucleotide-sugar biosynthesis; UDP-N-acetyl-alpha-D-glucosamine biosynthesis; UDP-N-acetyl-alpha-D-glucosamine from N-acetyl-alpha-D-glucosamine 1-phosphate: step 1/1. It functions in the pathway bacterial outer membrane biogenesis; LPS lipid A biosynthesis. Functionally, catalyzes the last two sequential reactions in the de novo biosynthetic pathway for UDP-N-acetylglucosamine (UDP-GlcNAc). The C-terminal domain catalyzes the transfer of acetyl group from acetyl coenzyme A to glucosamine-1-phosphate (GlcN-1-P) to produce N-acetylglucosamine-1-phosphate (GlcNAc-1-P), which is converted into UDP-GlcNAc by the transfer of uridine 5-monophosphate (from uridine 5-triphosphate), a reaction catalyzed by the N-terminal domain. This chain is Bifunctional protein GlmU, found in Streptomyces griseus subsp. griseus (strain JCM 4626 / CBS 651.72 / NBRC 13350 / KCC S-0626 / ISP 5235).